A 117-amino-acid polypeptide reads, in one-letter code: G antigen 4 (117 aa).

A disordered region spans residues 1–117 (MSWRGRSTYY…PEEGEKQSQC (117 aa)). 2 stretches are compositionally biased toward acidic residues: residues 32-45 (FSDE…EEGE) and 87-96 (ECEDGPDGQE). Positions 103–117 (EEVKTPEEGEKQSQC) are enriched in basic and acidic residues.

The protein belongs to the GAGE family. As to expression, expressed in a variety of tumor tissues but not in normal tissues, except testis.

Functionally, antigen, recognized on melanoma by autologous cytolytic T-lymphocytes. The polypeptide is G antigen 4 (Homo sapiens (Human)).